The chain runs to 648 residues: Replication restart protein PriA (648 aa).

A Helicase ATP-binding domain is found at 131-297 (TIFNESNKPT…KTHKYQLVTL (167 aa)). Residue 144–151 (GVTGSGKT) coordinates ATP. The DEAH box motif lies at 240–243 (DEEH). Positions 358, 361, 367, 370, 385, 388, 398, and 401 each coordinate Zn(2+). The region spanning 393 to 548 (KIFSSCPECL…SFFTNELEIR (156 aa)) is the Helicase C-terminal domain.

It belongs to the helicase family. PriA subfamily. As to quaternary structure, component of the replication restart primosome. Zn(2+) serves as cofactor.

The enzyme catalyses Couples ATP hydrolysis with the unwinding of duplex DNA by translocating in the 3'-5' direction.. It catalyses the reaction ATP + H2O = ADP + phosphate + H(+). Initiates the restart of stalled replication forks, which reloads the replicative helicase on sites other than the origin of replication. Recognizes and binds to abandoned replication forks and remodels them to uncover a helicase loading site. Promotes assembly of the primosome at these replication forks. This chain is Replication restart protein PriA, found in Rickettsia typhi (strain ATCC VR-144 / Wilmington).